We begin with the raw amino-acid sequence, 387 residues long: Galactokinase (387 aa).

33-36 (EHID) lines the substrate pocket. ATP-binding positions include serine 67 and 124-130 (GAGLSSS). Residues serine 130 and glutamate 162 each coordinate Mg(2+). The active-site Proton acceptor is aspartate 174. Tyrosine 224 lines the substrate pocket.

It belongs to the GHMP kinase family. GalK subfamily.

The protein resides in the cytoplasm. The enzyme catalyses alpha-D-galactose + ATP = alpha-D-galactose 1-phosphate + ADP + H(+). It participates in carbohydrate metabolism; galactose metabolism. Catalyzes the transfer of the gamma-phosphate of ATP to D-galactose to form alpha-D-galactose-1-phosphate (Gal-1-P). The chain is Galactokinase from Clostridium perfringens (strain ATCC 13124 / DSM 756 / JCM 1290 / NCIMB 6125 / NCTC 8237 / Type A).